A 447-amino-acid polypeptide reads, in one-letter code: MANVIVIGAQWGDEGKGKITDLLSRSADVVVRSQGGVNAGHTVVVEGQTFKLHLIPSGILYPDTECIIGSGTVIDPSVLLKEMAQLHALNVTTDNLYISQTAHVTMPYHRLLDQASEEKRGKYKIGTTGRGIGPTYADKSERIGIRVIDLINTENLRQKLEWTINYKNVILEKLYNLPPLDAKTVIEEYLEYAEILRPHVVDSSLKIYEAIRKRKNILFEGAQGTLLDLDHGTYPYVTSSNPIAGGACVGSGIGPTVIDRVIGVAKAYTTRVGEGPFPTELEGEIEQLLCDRGAEFGTTTGRRRRCGWFDAVIGRYAVRINGLDCLAITKLDVLDTLEEIKVCVAYQLDGQTCRHLPSSAGEFARCQPIYRTMPGWQQPTSDCRSLEDLPKQALDYLKFLGAIMEVPIAIISLGASRDQTIIVEDPIHGPKRALLDENGSPWDNHEF.

Residues 12-18 and 40-42 each bind GTP; these read GDEGKGK and GHT. The Proton acceptor role is filled by aspartate 13. Residues aspartate 13 and glycine 40 each contribute to the Mg(2+) site. IMP contacts are provided by residues 13-16, 38-41, threonine 128, arginine 142, glutamine 223, threonine 238, and arginine 302; these read DEGK and NAGH. Catalysis depends on histidine 41, which acts as the Proton donor. Residue 298 to 304 participates in substrate binding; that stretch reads TTTGRRR. Residues arginine 304, 330–332, and 412–414 each bind GTP; these read KLD and SLG.

Belongs to the adenylosuccinate synthetase family. In terms of assembly, homodimer. Requires Mg(2+) as cofactor.

It localises to the cytoplasm. The enzyme catalyses IMP + L-aspartate + GTP = N(6)-(1,2-dicarboxyethyl)-AMP + GDP + phosphate + 2 H(+). The protein operates within purine metabolism; AMP biosynthesis via de novo pathway; AMP from IMP: step 1/2. Its function is as follows. Plays an important role in the de novo pathway of purine nucleotide biosynthesis. Catalyzes the first committed step in the biosynthesis of AMP from IMP. This chain is Adenylosuccinate synthetase, found in Microcystis aeruginosa (strain NIES-843 / IAM M-2473).